A 212-amino-acid chain; its full sequence is MTHSKRWLEEHEKDPYVKRAKKEGYPSRAAYKLLEIHQKYKLFKPSMNVIDLGAAPGGWSQVAKDLVGPKGVVIAIDLLPIQSMLDVIFIQGDFNEPEIFNQLEAIVAKKTLTGQVDLVISDMAPNISGIKNVDQSRSLHLVELAWDCAQKLLARGGTFLVKVFQGPGVDRFLINLRPYFNQVKFLKPSASRSRSSEIYILAGEFLGYNQRV.

Gly57, Trp59, Asp77, Asp93, and Asp122 together coordinate S-adenosyl-L-methionine. The Proton acceptor role is filled by Lys162.

Belongs to the class I-like SAM-binding methyltransferase superfamily. RNA methyltransferase RlmE family.

The protein resides in the cytoplasm. It carries out the reaction uridine(2552) in 23S rRNA + S-adenosyl-L-methionine = 2'-O-methyluridine(2552) in 23S rRNA + S-adenosyl-L-homocysteine + H(+). Functionally, specifically methylates the uridine in position 2552 of 23S rRNA at the 2'-O position of the ribose in the fully assembled 50S ribosomal subunit. This is Ribosomal RNA large subunit methyltransferase E from Coxiella burnetii (strain CbuK_Q154) (Coxiella burnetii (strain Q154)).